Consider the following 653-residue polypeptide: UvrABC system protein B (653 aa).

In terms of domain architecture, Helicase ATP-binding spans 25–182; sequence EGIERGVREQ…EKLVELQYKS (158 aa). Residue 38–45 coordinates ATP; that stretch reads GVTGSGKT. A Beta-hairpin motif is present at residues 91–114; that stretch reads YYDYYQPEAYIPHSDVYIEKDALI. Positions 429–591 constitute a Helicase C-terminal domain; the sequence is QIADVVNESQ…ITPKSISKSV (163 aa). The 36-residue stretch at 616–651 folds into the UVR domain; it reads EEDIIKLQKEMLLHAENLEFEKALEIRNQINKLSQH.

Belongs to the UvrB family. Forms a heterotetramer with UvrA during the search for lesions. Interacts with UvrC in an incision complex.

The protein resides in the cytoplasm. In terms of biological role, the UvrABC repair system catalyzes the recognition and processing of DNA lesions. A damage recognition complex composed of 2 UvrA and 2 UvrB subunits scans DNA for abnormalities. Upon binding of the UvrA(2)B(2) complex to a putative damaged site, the DNA wraps around one UvrB monomer. DNA wrap is dependent on ATP binding by UvrB and probably causes local melting of the DNA helix, facilitating insertion of UvrB beta-hairpin between the DNA strands. Then UvrB probes one DNA strand for the presence of a lesion. If a lesion is found the UvrA subunits dissociate and the UvrB-DNA preincision complex is formed. This complex is subsequently bound by UvrC and the second UvrB is released. If no lesion is found, the DNA wraps around the other UvrB subunit that will check the other stand for damage. In Anaplasma phagocytophilum (strain HZ), this protein is UvrABC system protein B.